Here is a 394-residue protein sequence, read N- to C-terminus: Chaperone protein DnaJ (394 aa).

Positions Asp4–Gly68 constitute a J domain. Residues Gly136–Thr218 form a CR-type zinc finger. Positions 149, 152, 166, 169, 192, 195, 206, and 209 each coordinate Zn(2+). CXXCXGXG motif repeat units lie at residues Cys149 to Gly156, Cys166 to Gly173, Cys192 to Gly199, and Cys206 to Gly213.

Belongs to the DnaJ family. In terms of assembly, homodimer. The cofactor is Zn(2+).

It localises to the cytoplasm. Participates actively in the response to hyperosmotic and heat shock by preventing the aggregation of stress-denatured proteins and by disaggregating proteins, also in an autonomous, DnaK-independent fashion. Unfolded proteins bind initially to DnaJ; upon interaction with the DnaJ-bound protein, DnaK hydrolyzes its bound ATP, resulting in the formation of a stable complex. GrpE releases ADP from DnaK; ATP binding to DnaK triggers the release of the substrate protein, thus completing the reaction cycle. Several rounds of ATP-dependent interactions between DnaJ, DnaK and GrpE are required for fully efficient folding. Also involved, together with DnaK and GrpE, in the DNA replication of plasmids through activation of initiation proteins. This is Chaperone protein DnaJ from Synechococcus sp. (strain JA-2-3B'a(2-13)) (Cyanobacteria bacterium Yellowstone B-Prime).